The chain runs to 186 residues: Ribosome-recycling factor (186 aa).

It belongs to the RRF family.

The protein resides in the cytoplasm. Functionally, responsible for the release of ribosomes from messenger RNA at the termination of protein biosynthesis. May increase the efficiency of translation by recycling ribosomes from one round of translation to another. The chain is Ribosome-recycling factor from Maricaulis maris (strain MCS10) (Caulobacter maris).